Consider the following 367-residue polypeptide: Succinyl-diaminopimelate desuccinylase (367 aa).

His64 lines the Zn(2+) pocket. Asp66 is an active-site residue. Zn(2+) is bound at residue Asp95. The active-site Proton acceptor is Glu125. Zn(2+) is bound by residues Glu126, Glu154, and His339.

Belongs to the peptidase M20A family. DapE subfamily. Homodimer. Zn(2+) is required as a cofactor. It depends on Co(2+) as a cofactor.

The enzyme catalyses N-succinyl-(2S,6S)-2,6-diaminopimelate + H2O = (2S,6S)-2,6-diaminopimelate + succinate. Its pathway is amino-acid biosynthesis; L-lysine biosynthesis via DAP pathway; LL-2,6-diaminopimelate from (S)-tetrahydrodipicolinate (succinylase route): step 3/3. Catalyzes the hydrolysis of N-succinyl-L,L-diaminopimelic acid (SDAP), forming succinate and LL-2,6-diaminopimelate (DAP), an intermediate involved in the bacterial biosynthesis of lysine and meso-diaminopimelic acid, an essential component of bacterial cell walls. The protein is Succinyl-diaminopimelate desuccinylase of Sulfurovum sp. (strain NBC37-1).